A 160-amino-acid chain; its full sequence is Transcription antitermination protein NusB (160 aa).

It belongs to the NusB family.

Functionally, involved in transcription antitermination. Required for transcription of ribosomal RNA (rRNA) genes. Binds specifically to the boxA antiterminator sequence of the ribosomal RNA (rrn) operons. This chain is Transcription antitermination protein NusB, found in Rhizobium johnstonii (strain DSM 114642 / LMG 32736 / 3841) (Rhizobium leguminosarum bv. viciae).